The primary structure comprises 428 residues: Cholesterol 7-desaturase (428 aa).

Residues 6 to 26 form a helical membrane-spanning segment; that stretch reads IWGFLTAHPISVVTTILIVYL. One can recognise a Rieske domain in the interval 81 to 187; that stretch reads WYCVCESEKL…CIERNNNIYL (107 aa). The [2Fe-2S] cluster site is built by Cys122, His124, Cys143, and His146.

Belongs to the cholesterol 7-desaturase family. Requires [2Fe-2S] cluster as cofactor. As to expression, expressed in intestine at all postembryonic stages, including dauer. Expression is reduced in daf-2 mutants.

Its subcellular location is the membrane. The catalysed reaction is cholesterol + NADPH + O2 + H(+) = 7-dehydrocholesterol + NADP(+) + 2 H2O. It catalyses the reaction cholesterol + NADH + O2 + H(+) = 7-dehydrocholesterol + NAD(+) + 2 H2O. The protein operates within steroid hormone biosynthesis; dafachronic acid biosynthesis. Catalyzes the production of 7-dehydrocholesterol (7-DHC or cholesta-5,7-dien-3beta-ol) by inserting a double bond (desaturating) at the C7-C8 single bond of cholesterol. This reaction is the first step in the synthesis of the steroid hormone Delta(7)-dafachronic acid (one of the principal steroid hormones in nematodes). Dafachronic acids bind directly to the nuclear hormone receptor (NHR) daf-12, suppressing dauer formation and inducing reproductive growth. The chain is Cholesterol 7-desaturase (daf-36) from Caenorhabditis elegans.